The sequence spans 729 residues: Denticleless protein homolog (729 aa).

Methionine 1 carries the post-translational modification N-acetylmethionine. WD repeat units lie at residues 47-89, 96-135, and 138-178; these read GVPV…SKKT, AHWNAVFDLAWVPGELKLVTAAGDQTAKFWDVRAGELMGT, and GHQC…KDGF. Residues 168–171 carry the DDB1-binding motif motif; it reads WDTR. A compositionally biased stretch (polar residues) spans 189–198; sequence HNTADKQTPS. Residues 189 to 212 form a disordered region; the sequence is HNTADKQTPSKPKKKQNSKGLAPA. Threonine 196 is subject to Phosphothreonine. The Nuclear localization signal signature appears at 197–203; that stretch reads PSKPKKK. WD repeat units follow at residues 214–253, 269–308, 313–354, and 358–398; these read DSQQSVTVVLFQDENTLVSAGAVDGIIKVWDLRKNYTAYR, TRKLGYSSLVLDSTGSTLFANCTDDNIYMFNMTGLKTSPV, GHQN…HPPT, and GHSQ…EEKP. The DDB1-binding motif signature appears at 243–246; the sequence is WDLR. Serine 409 and serine 425 each carry phosphoserine. 2 disordered regions span residues 416-445 and 460-491; these read KACPVTVPSSQSTPAKAPRAKSSPSISSPS and PSSTPTFSVKTTPATTRSSVSRRGSISSVSPK. Positions 427 to 445 are enriched in low complexity; the sequence is STPAKAPRAKSSPSISSPS. The segment covering 460–475 has biased composition (polar residues); sequence PSSTPTFSVKTTPATT. Threonine 463 bears the Phosphothreonine; by CDK1 and CDK2 mark. Residues 476–491 show a composition bias toward low complexity; the sequence is RSSVSRRGSISSVSPK. Serine 484, serine 489, serine 494, and serine 511 each carry phosphoserine. Residues 504-546 form a disordered region; it reads VTRTPSSSPPVTPPASETKISSPRKALIPVSQKSSQADACSES. A Phosphothreonine modification is found at threonine 515. Serine 556 is modified (phosphoserine). Residues 596-607 show a composition bias toward polar residues; that stretch reads VLSQDSEGPTKS. Residues 596-705 form a disordered region; it reads VLSQDSEGPT…GPVTITPSSM (110 aa). 2 stretches are compositionally biased toward low complexity: residues 630–645 and 674–688; these read EGCGPLPLPLRPCGEG and SSPRSPSSQTPSSRR. 2 positions are modified to phosphoserine: serine 675 and serine 678. Phosphothreonine occurs at positions 683 and 701.

It belongs to the WD repeat cdt2 family. In terms of assembly, component of the DCX(DTL) E3 ubiquitin ligase complex (also called CRL4(CDT2)), at least composed of CUL4 (CUL4A or CUL4B), DDB1, DTL/CDT2 and RBX1. Interacts with CDKN1A and DDB1. Interacts with FBXO11; SCF(FBXWO11) controls DTL stability but DCX(DTL) does not control FBXO11 stability. Interacts with CRY1. Post-translationally, ubiquitinated by the anaphase promoting complex/cyclosome (APC/C). Autoubiquitinated through 'Lys-48'-polyubiquitin chains in a PCNA-independent reaction, allowing proteasomal turnover. Polyubiquitinated by SCF(FBXO11) when not phosphorylated, leading to its degradation. A tight regulation of the polyubiquitination by SCF(FBXO11) is involved in the control of different processes such as TGF-beta signaling, cell cycle progression and exit. Phosphorylated at Thr-463 by CDK1/Cyclin B and CDK2/Cycnlin A but not by CDK2/Cyclin E, MAPK1 or PLK1. Phosphorylation at Thr-463 inhibits the interaction with FBXO11 and decreases upon cell cycle exit induced by TGF-beta or serum starvation.

The protein localises to the nucleus. It localises to the nucleus membrane. The protein resides in the cytoplasm. It is found in the cytoskeleton. Its subcellular location is the microtubule organizing center. The protein localises to the centrosome. It localises to the chromosome. The protein operates within protein modification; protein ubiquitination. Substrate-specific adapter of a DCX (DDB1-CUL4-X-box) E3 ubiquitin-protein ligase complex required for cell cycle control, DNA damage response and translesion DNA synthesis. The DCX(DTL) complex, also named CRL4(CDT2) complex, mediates the polyubiquitination and subsequent degradation of CDT1, CDKN1A/p21(CIP1), FBH1, KMT5A and SDE2. CDT1 degradation in response to DNA damage is necessary to ensure proper cell cycle regulation of DNA replication. CDKN1A/p21(CIP1) degradation during S phase or following UV irradiation is essential to control replication licensing. KMT5A degradation is also important for a proper regulation of mechanisms such as TGF-beta signaling, cell cycle progression, DNA repair and cell migration. Most substrates require their interaction with PCNA for their polyubiquitination: substrates interact with PCNA via their PIP-box, and those containing the 'K+4' motif in the PIP box, recruit the DCX(DTL) complex, leading to their degradation. In undamaged proliferating cells, the DCX(DTL) complex also promotes the 'Lys-164' monoubiquitination of PCNA, thereby being involved in PCNA-dependent translesion DNA synthesis. The DDB1-CUL4A-DTL E3 ligase complex regulates the circadian clock function by mediating the ubiquitination and degradation of CRY1. The polypeptide is Denticleless protein homolog (Dtl) (Mus musculus (Mouse)).